The sequence spans 446 residues: Choline monooxygenase, chloroplastic (446 aa).

The transit peptide at 1 to 65 (MAASATTMLL…NTSTNKIITK (65 aa)) directs the protein to the chloroplast. A Rieske domain is found at 127-234 (WQVAGYSEQV…VAEWGPFILI (108 aa)). The [2Fe-2S] cluster site is built by Cys-169, His-171, Cys-188, and His-191. The Fe cation site is built by His-294 and His-299.

This sequence belongs to the choline monooxygenase family. [2Fe-2S] cluster serves as cofactor. It depends on Fe cation as a cofactor. Mg(2+) is required as a cofactor. Expressed in roots and leaves.

It is found in the plastid. The protein localises to the chloroplast stroma. It catalyses the reaction choline + 2 reduced [2Fe-2S]-[ferredoxin] + O2 + 2 H(+) = betaine aldehyde hydrate + 2 oxidized [2Fe-2S]-[ferredoxin] + H2O. The protein operates within amine and polyamine biosynthesis; betaine biosynthesis via choline pathway; betaine aldehyde from choline (monooxygenase route): step 1/1. Functionally, catalyzes the first step of the osmoprotectant glycine betaine synthesis. The chain is Choline monooxygenase, chloroplastic (CMO) from Beta vulgaris (Sugar beet).